The chain runs to 296 residues: dTDP-rhamnosyl transferase RfbF (296 aa).

It belongs to the glycosyltransferase 2 family.

It functions in the pathway bacterial outer membrane biogenesis; lipopolysaccharide biosynthesis. This is dTDP-rhamnosyl transferase RfbF (rfbF) from Shigella flexneri.